We begin with the raw amino-acid sequence, 488 residues long: MPPGGGGPMKDCEYSQISTHSSSPMESPHKKKKIAARRKWEVFPGRNKFFCNGRIMMARQTGVFYLTLVLILVTSGLFFAFDCPYLAVKITPAIPAVAGILFFFVMGTLLRTSFSDPGVLPRATPDEAADLERQIDIANGTSSGGYRPPPRTKEVIINGQTVKLKYCFTCKIFRPPRASHCSLCDNCVERFDHHCPWVGNCVGKRNYRFFYMFILSLSFLTVFIFAFVITHVILRSQQTGFLNALKDSPASVLEAVVCFFSVWSIVGLSGFHTYLISSNQTTNEDIKGSWSNKRGKENYNPYSYGNIFTNCCVALCGPISPSLIDRRGYIQPDTPQPAAPSNGITMYGATQSQSDMCDQDQCIQSTKFVLQAAATPLLQSEPSLTSDELHLPGKPGLGTPCASLTLGPPTPPASMPNLAEATLADVMPRKDEHMGHQFLTPDEAPSPPRLLAAGSPLAHSRTMHVLGLASQDSLHEDSVRGLVKLSSV.

At 1–60 (MPPGGGGPMKDCEYSQISTHSSSPMESPHKKKKIAARRKWEVFPGRNKFFCNGRIMMARQ) the chain is on the cytoplasmic side. Residues 61 to 81 (TGVFYLTLVLILVTSGLFFAF) form a helical membrane-spanning segment. The Lumenal segment spans residues 82-89 (DCPYLAVK). A helical membrane pass occupies residues 90 to 110 (ITPAIPAVAGILFFFVMGTLL). The Cytoplasmic segment spans residues 111–208 (RTSFSDPGVL…GNCVGKRNYR (98 aa)). In terms of domain architecture, DHHC spans 165–215 (KYCFTCKIFRPPRASHCSLCDNCVERFDHHCPWVGNCVGKRNYRFFYMFIL). The S-palmitoyl cysteine intermediate role is filled by cysteine 195. A helical membrane pass occupies residues 209–229 (FFYMFILSLSFLTVFIFAFVI). Residues 230–255 (THVILRSQQTGFLNALKDSPASVLEA) are Lumenal-facing. The chain crosses the membrane as a helical span at residues 256–276 (VVCFFSVWSIVGLSGFHTYLI). Topologically, residues 277–488 (SSNQTTNEDI…VRGLVKLSSV (212 aa)) are cytoplasmic. A Phosphoserine modification is found at serine 455.

This sequence belongs to the DHHC palmitoyltransferase family. ERF2/ZDHHC9 subfamily. In terms of tissue distribution, widely expressed.

Its subcellular location is the endoplasmic reticulum membrane. It localises to the golgi apparatus. The protein resides in the golgi stack membrane. It catalyses the reaction L-cysteinyl-[protein] + hexadecanoyl-CoA = S-hexadecanoyl-L-cysteinyl-[protein] + CoA. Functionally, palmitoyltransferase that could catalyze the addition of palmitate onto various protein substrates. May have a palmitoyltransferase activity toward the beta-2 adrenergic receptor/ADRB2 and thereby regulate G protein-coupled receptor signaling. May play a role in cell differentiation and apoptosis. The polypeptide is Palmitoyltransferase ZDHHC14 (Homo sapiens (Human)).